The sequence spans 393 residues: Isocitrate dehydrogenase [NADP] (393 aa).

Positions 102, 104, 108, 118, and 142 each coordinate D-threo-isocitrate. Asp283 is a Mg(2+) binding site.

Belongs to the isocitrate and isopropylmalate dehydrogenases family. As to quaternary structure, homodimer. Requires Mg(2+) as cofactor. Mn(2+) is required as a cofactor.

The enzyme catalyses D-threo-isocitrate + NADP(+) = 2-oxoglutarate + CO2 + NADPH. Catalyzes the oxidative decarboxylation of isocitrate to 2-oxoglutarate and carbon dioxide with the concomitant reduction of NADP(+). This Streptococcus mutans serotype c (strain ATCC 700610 / UA159) protein is Isocitrate dehydrogenase [NADP] (icd).